A 762-amino-acid polypeptide reads, in one-letter code: MARHPWGMERYERVRLTNPDKVLYPATGTTKAEVFDYYLSIAQVMVPHIAGRPVTRKRWPNGVAEEAFFEKQLASSAPSWLERGSITHKSGTTTYPIINTREGLAWVAQQASLEVHVPQWRFEDGDQGPATRIVFDLDPGEGVTMTQLCEIAHEVRALMTDLDLETYPLTSGSKGLHLYVPLAEPISSRGASVLARRVAQQLEQAMPKLVTATMTKSLRAGKVFLDWSQNNAAKTTIAPYSLRGRDHPTVAAPRTWDEIADPELRHLRFDEVLDRLDEYGDLLAPLDADAPIADKLTTYRSMRDASKTPEPVPKEIPKTGNNDKFVIQEHHARRLHYDLRLERDGVLVSFAVPKNLPETTAENRLAVHTEDHPIEYLAFHGSIPKGEYGAGDMVIWDSGSYETEKFRVPEELDNPDDSHGEIIVTLHGEKVDGRYALIQTKGKNWLAHRMKDQKNARPEDFAPMLATEGSVAKYKAKQWAFEGKWDGYRVIIDADHGQLQIRSRTGREVTGEYPQFKALAADLAEHHVVLDGEAVALDESGVPSFGQMQNRARSTRVEFWAFDILWLDGRSLLRAKYSDRRKILEALADGGGLIVPDQLPGDGPEAMEHVRKKRFEGVVAKKWDSTYQPGRRSSSWIKDKIWNTQEVVIGGWRQGEGGRSSGIGALVLGIPGPEGLQFVGRVGTGFTEKELSKLKDMLKPLHTDESPFNAPLPKVDARGVTFVRPELVGEVRYSERTSDGRLRQPSWRGLRPDKTPDEVVWE.

A DNA repair polymerase domain (Pol) region spans residues 14–260; that stretch reads VRLTNPDKVL…AAPRTWDEIA (247 aa). 2 consecutive DNA-binding regions follow at residues 18–21 and Lys31; that span reads NPDK. Substrate is bound at residue Lys57. 5 consecutive DNA-binding regions follow at residues 58 to 60, 68 to 72, Ser76, 88 to 93, and Gln109; these read RWP, FFEKQ, and HKSGTT. Substrate contacts are provided by residues His116, 136–138, and 171–177; these read DLD and SGSKGLH. Asp136 and Asp138 together coordinate Mn(2+). A Mn(2+)-binding site is contributed by Asp226. Gln229 contacts substrate. A DNA-binding region spans residues 233 to 234; the sequence is AK. 2 residues coordinate substrate: Thr235 and Arg243. Residues 296 to 453 are 3'-phosphoesterase domain (PE); that stretch reads LTTYRSMRDA…NWLAHRMKDQ (158 aa). His330, His336, and Asp338 together coordinate Mn(2+). Residues 463–760 form a ligase domain (Lig) region; sequence PMLATEGSVA…RPDKTPDEVV (298 aa). The N6-AMP-lysine intermediate role is filled by Lys484. The Mn(2+) site is built by Asp486 and Glu616. The tract at residues 735 to 762 is disordered; it reads ERTSDGRLRQPSWRGLRPDKTPDEVVWE. The span at 750–762 shows a compositional bias: basic and acidic residues; the sequence is LRPDKTPDEVVWE.

This sequence in the N-terminal section; belongs to the LigD polymerase family. It in the central section; belongs to the LigD 3'-phosphoesterase family. The protein in the C-terminal section; belongs to the ATP-dependent DNA ligase family. As to quaternary structure, interacts with Sir2 and probably also with Ku; may form a trimeric complex during NHEJ. Interacts with Mycobacterium phage Omega and Corndog Ku homologs (AC Q853W0, AC Q856K7). Mn(2+) serves as cofactor.

It catalyses the reaction ATP + (deoxyribonucleotide)n-3'-hydroxyl + 5'-phospho-(deoxyribonucleotide)m = (deoxyribonucleotide)n+m + AMP + diphosphate.. In terms of biological role, with Ku forms a non-homologous end joining (NHEJ) repair enzyme which repairs blunt-end and 5'-overhang DNA double strand breaks (DSB) with about 50% fidelity, and DSB with non-complementary 3' ends. Plays a partial role in NHEJ during 3'-overhang repair. NHEJ repairs DSB with blunt ends and 5' overhangs with a high level of nucleotide insertion/deletion, without a need for microhomology. Acts as a DNA ligase on singly nicked dsDNA, as a DNA-directed DNA polymerase on 5' overhangs, and adds non-templated nucleotides to 3' overhangs (terminal transferase). Fills in gaps in dsDNA, prefers a 5'-phosphate in the gap. Site-directed mutations leading to ligase loss alter the bias from insertion to deletion mutations, and indicate another ligase (LigC1 and/or LigC2) can compensate. The preference of the polymerase domain for rNTPs over dNTPs may be advantageous in dormant cells, where the dNTP pool may be limiting. Its function is as follows. The ligase activity is required for replication of viruses with short cos ends (4 bases) such as Mycobacterium phage Omega and Corndog, but not D29 which has a 9 base cos end. Stimulates dsDNA end joining by LigD; when expressed with endogenous or Mycobacterium phage Omega Ku, can reconstitute NHEJ in S.cerevisiae. This chain is Multifunctional non-homologous end joining protein LigD (ligD), found in Mycolicibacterium smegmatis (strain ATCC 700084 / mc(2)155) (Mycobacterium smegmatis).